The following is a 193-amino-acid chain: Internal protein III (193 aa).

The propeptide occupies 1-10 (MKTYQEFIAE).

Internal protein III is one of four proteins in a complex that functions in bacteriophage head maturation. In Enterobacteria phage T4 (Bacteriophage T4), this protein is Internal protein III (ipi3).